The chain runs to 154 residues: 17 kDa surface antigen (154 aa).

The first 19 residues, 1–19, serve as a signal peptide directing secretion; that stretch reads MKLLSKIMVIALATSMLQA. Cys-20 carries the N-palmitoyl cysteine lipid modification. The S-diacylglycerol cysteine moiety is linked to residue Cys-20.

Belongs to the rickettsiale 17 kDa surface antigen family.

It is found in the cell outer membrane. This chain is 17 kDa surface antigen (omp), found in Rickettsia parkeri.